The primary structure comprises 344 residues: uncharacterized protein (344 aa).

The tract at residues 304–344 (AVPAPTPRRPLDSVLQIRQTPEKGRNASDRNARETGWFSPP) is disordered. Residues 323-336 (TPEKGRNASDRNAR) show a composition bias toward basic and acidic residues.

This is an uncharacterized protein from Mycobacterium tuberculosis (strain CDC 1551 / Oshkosh).